Here is a 394-residue protein sequence, read N- to C-terminus: RNA binding protein fox-1 homolog 2 (394 aa).

Disordered regions lie at residues 1 to 70 (MGRL…DYAG) and 83 to 135 (TQAH…HVSN). 2 stretches are compositionally biased toward polar residues: residues 24–36 (RDSQGNQEPTTTP) and 83–103 (TQAHGEQSSNSPSTQNGSLTT). Over residues 105–125 (GGAQTDGQQSQTQSSENSESK) the composition is skewed to low complexity. Positions 129–205 (KRLHVSNIPF…RKIEVNNATA (77 aa)) constitute an RRM domain. An Omega-N-methylarginine modification is found at arginine 285. Asymmetric dimethylarginine is present on residues arginine 301 and arginine 333. Arginine 385 and arginine 390 each carry asymmetric dimethylarginine; alternate. An omega-N-methylarginine; alternate mark is found at arginine 385 and arginine 390.

As to quaternary structure, interacts with ER-alpha N-terminal activation domain. Interacts with RBPMS; the interaction allows cooperative assembly of stable cell-specific alternative splicing regulatory complexes.

The protein resides in the nucleus. The protein localises to the cytoplasm. In terms of biological role, RNA-binding protein that regulates alternative splicing events by binding to 5'-UGCAUGU-3' elements. Prevents binding of U2AF2 to the 3'-splice site. Regulates alternative splicing of tissue-specific exons and of differentially spliced exons during erythropoiesis. Seems to act as a coregulatory factor of ER-alpha. Together with RNA binding proteins RBPMS and MBNL1/2, activates vascular smooth muscle cells alternative splicing events. This Bos taurus (Bovine) protein is RNA binding protein fox-1 homolog 2 (RBFOX2).